The chain runs to 283 residues: Protein ATAF2 (283 aa).

Residues 7–159 (LPAGFRFHPT…DWVLCRIYNK (153 aa)) enclose the NAC domain. A DNA-binding region spans residues 103–165 (LGIKKALVFY…IYNKKGTMEK (63 aa)). The segment at 171-211 (EKPRTTTMAEQSSSPFDTSDSTYPTLQEDDSSSSGGHGHVV) is disordered. Positions 175 to 195 (TTTMAEQSSSPFDTSDSTYPT) are enriched in polar residues.

Homodimer. Interacts with AHK2. Interacts with AHL12 and AHL27. Interacts with the helicase domain of the tobamovirus (TMV) replicase. Expressed in roots, cotyledons, rosette leaves, cauline leaves and mature flowers. Expressed at low levels in stems and flower buds.

It localises to the nucleus. Functionally, involved in disease resistance response. May function as repressor of pathogenesis-related proteins. May function in the regulation of host basal defense responses against viral infection. Transcriptional activator involved in responses to wounding and infection with tobamovirus (TMV). Binds to the DNA sequences 5'-AAAATATCT-3' and 5'AGATTTTT-3' of CYP734A1/BAS1 and CYP72C1/SOB7 promoters, respectively. Acts as a suppressor of the brassinosteroid (BR)-inactivating enzymes CYP734A1/BAS1 and CYP72C1/SOB7, and prevents their expression in almost all tissues. Plays a central role in integrating BR homeostasis and seedling development. Regulates the spatial regulation of BR homeostasis and participates in the regulation of hypocotyl elongation and root growth by suppressing BR catabolism. Mediates connection between BR catabolism and photomorphogenesis. Binds to, and transactivates the promoter of the auxin biosynthetic gene NIT2. Stress-responsive NAC transcription factor involved in ABA-inducible leaf senescence signaling. Required for normal seed development and morphology. This Arabidopsis thaliana (Mouse-ear cress) protein is Protein ATAF2 (NAC081).